We begin with the raw amino-acid sequence, 177 residues long: Bifunctional protein PyrR (177 aa).

The PRPP-binding signature appears at 98–110 (IILVDDVIYTGRT).

Belongs to the purine/pyrimidine phosphoribosyltransferase family. PyrR subfamily. In terms of assembly, homodimer and homohexamer; in equilibrium.

The catalysed reaction is UMP + diphosphate = 5-phospho-alpha-D-ribose 1-diphosphate + uracil. In terms of biological role, regulates transcriptional attenuation of the pyrimidine nucleotide (pyr) operon by binding in a uridine-dependent manner to specific sites on pyr mRNA. This disrupts an antiterminator hairpin in the RNA and favors formation of a downstream transcription terminator, leading to a reduced expression of downstream genes. Its function is as follows. Also displays a weak uracil phosphoribosyltransferase activity which is not physiologically significant. The sequence is that of Bifunctional protein PyrR from Clostridium kluyveri (strain ATCC 8527 / DSM 555 / NBRC 12016 / NCIMB 10680 / K1).